The chain runs to 196 residues: Penicillin-binding protein activator LpoB (196 aa).

Residues 1 to 16 (MKKYLGIVLMALVIAG) form the signal peptide. Cysteine 17 is lipidated: N-palmitoyl cysteine. Cysteine 17 is lipidated: S-diacylglycerol cysteine. Positions 24-54 (TEQPATIEPAVPTPSKPQLPPSESQPLPTPP) are disordered. Pro residues predominate over residues 34–43 (VPTPSKPQLP).

Belongs to the LpoB family. Interacts with PBP1b.

It localises to the cell outer membrane. Functionally, regulator of peptidoglycan synthesis that is essential for the function of penicillin-binding protein 1B (PBP1b). The chain is Penicillin-binding protein activator LpoB from Dickeya dadantii (strain 3937) (Erwinia chrysanthemi (strain 3937)).